The following is a 604-amino-acid chain: Ribosome-inactivating protein PMRIPm (604 aa).

Residues 1–43 (MRVVAAILYINVVVALICGLGIQGGALDLQDYPSVSFQGDAMQ) form the signal peptide. Residue Glu211 is part of the active site. Cystine bridges form between Cys301/Cys332, Cys348/Cys367, and Cys392/Cys409. Ricin B-type lectin domains lie at 335–463 (GEPT…WRVG) and 466–598 (VEPI…WLTV). The 1-alpha repeat unit spans residues 345-387 (AGWCVDVKDGRDNDGNPIQVLSCGDGQERKQQWTFHRDGTIRS). Residues 389–429 (LGKCMTAYGFKHGEYVMIYDCDTAIAGANKWVVSIDGTITN) form a 1-beta repeat. The 1-gamma repeat unit spans residues 432–465 (SGLVLTAPRGATGTTLLVEKNVHAARQCWRVGDD). One copy of the 2-alpha repeat lies at 477-521 (QEKCLEANYLENTNVSRYTKVFLDDCVLDRQQQRWALYSDGTIRA). An intrachain disulfide couples Cys480 to Cys502. The N-linked (GlcNAc...) asparagine glycan is linked to Asn490. A 2-beta repeat occupies 525–563 (RSLRVTADGHRSLDSIIILACKGWGNQRWVFNTDGTILN). One copy of the 2-gamma repeat lies at 566–599 (AKLVMDVKDSDVSLLQIILHQSTGKPNQKWLTVT).

The protein belongs to the ribosome-inactivating protein family. Type 2 RIP subfamily. As to quaternary structure, disulfide-linked dimer of A and B chains. Post-translationally, the precursor is processed in two chains, A and B, that are linked by a disulfide bond. In terms of processing, glycosylated. The N-terminus is blocked. As to expression, expressed in rhizome and abundantly in leaves (at protein level).

It carries out the reaction Endohydrolysis of the N-glycosidic bond at one specific adenosine on the 28S rRNA.. With respect to regulation, strongly inhibited by asialofetuin and asialomucin. Its function is as follows. Gal/GalNAc-specific agglutinin. Behaves as a type-2 ribosome-inactivating protein. Inhibits mammalian ribosomes. The A chain is responsible for inhibiting protein synthesis through the catalytic inactivation of 60S ribosomal subunits by removing adenine from position 4,324 of 28S rRNA. The B chain binds to cell receptors and probably facilitates the entry into the cell of the A chain; B chains are also responsible for cell agglutination (lectin activity). Involved in plant defense against insects. Has very low cytotoxic activity against the human tumor cell line Molt4, but higher against CEM. The sequence is that of Ribosome-inactivating protein PMRIPm from Polygonatum multiflorum (Solomon's seal).